A 164-amino-acid chain; its full sequence is Endoribonuclease YbeY (164 aa).

3 residues coordinate Zn(2+): His114, His118, and His124.

Belongs to the endoribonuclease YbeY family. Zn(2+) is required as a cofactor.

The protein localises to the cytoplasm. Single strand-specific metallo-endoribonuclease involved in late-stage 70S ribosome quality control and in maturation of the 3' terminus of the 16S rRNA. The polypeptide is Endoribonuclease YbeY (Mycoplasmoides gallisepticum (strain R(low / passage 15 / clone 2)) (Mycoplasma gallisepticum)).